Consider the following 92-residue polypeptide: Small ribosomal subunit protein uS19 (92 aa).

Belongs to the universal ribosomal protein uS19 family.

In terms of biological role, protein S19 forms a complex with S13 that binds strongly to the 16S ribosomal RNA. This is Small ribosomal subunit protein uS19 from Leptospira biflexa serovar Patoc (strain Patoc 1 / Ames).